Consider the following 890-residue polypeptide: Probable LRR receptor-like serine/threonine-protein kinase At1g51860 (890 aa).

The N-terminal stretch at 1-23 is a signal peptide; sequence MKSLHWFLHLLIIAFTVLRSVEA. The Extracellular segment spans residues 24 to 513; sequence QNQAGFISLD…KESKKVPMVA (490 aa). N-linked (GlcNAc...) asparagine glycosylation is found at Asn49, Asn96, Asn142, Asn181, Asn256, Asn285, Asn289, Asn295, Asn312, Asn332, Asn340, Asn402, and Asn419. LRR repeat units lie at residues 412 to 435, 436 to 458, and 460 to 481; these read RIISLNLNGSELTGSITSDISKLT, LLTVLDLSNNDLSGDIPTFFAEM, and SLKLINLSGNPNLNLTAIPDSL. 3 N-linked (GlcNAc...) asparagine glycosylation sites follow: Asn465, Asn473, and Asn497. A helical membrane pass occupies residues 514-534; that stretch reads IAASVAGVFALLVILAIFFVI. Over 535-890 the chain is Cytoplasmic; sequence KRKNVKAHKS…STSDFAPGAR (356 aa). Position 575 is a phosphothreonine (Thr575). A Protein kinase domain is found at 584-856; it reads NNFERVLGKG…HVVMELNDCV (273 aa). Residues 590 to 598 and Lys611 contribute to the ATP site; that span reads LGKGGFGTV. Tyr656 carries the phosphotyrosine modification. Asp708 functions as the Proton acceptor in the catalytic mechanism. Phosphoserine is present on Ser742. Residues Thr743 and Thr748 each carry the phosphothreonine modification. Phosphotyrosine is present on Tyr756.

Belongs to the protein kinase superfamily. Ser/Thr protein kinase family.

It is found in the membrane. The enzyme catalyses L-seryl-[protein] + ATP = O-phospho-L-seryl-[protein] + ADP + H(+). The catalysed reaction is L-threonyl-[protein] + ATP = O-phospho-L-threonyl-[protein] + ADP + H(+). The protein is Probable LRR receptor-like serine/threonine-protein kinase At1g51860 of Arabidopsis thaliana (Mouse-ear cress).